The chain runs to 299 residues: ATP phosphoribosyltransferase (299 aa).

This sequence belongs to the ATP phosphoribosyltransferase family. Long subfamily. Equilibrium between an active dimeric form, an inactive hexameric form and higher aggregates. Interconversion between the various forms is largely reversible and is influenced by the natural substrates and inhibitors of the enzyme. Mg(2+) serves as cofactor.

The protein resides in the cytoplasm. It carries out the reaction 1-(5-phospho-beta-D-ribosyl)-ATP + diphosphate = 5-phospho-alpha-D-ribose 1-diphosphate + ATP. It functions in the pathway amino-acid biosynthesis; L-histidine biosynthesis; L-histidine from 5-phospho-alpha-D-ribose 1-diphosphate: step 1/9. Its activity is regulated as follows. Feedback inhibited by histidine. In terms of biological role, catalyzes the condensation of ATP and 5-phosphoribose 1-diphosphate to form N'-(5'-phosphoribosyl)-ATP (PR-ATP). Has a crucial role in the pathway because the rate of histidine biosynthesis seems to be controlled primarily by regulation of HisG enzymatic activity. This is ATP phosphoribosyltransferase from Sodalis glossinidius (strain morsitans).